A 153-amino-acid chain; its full sequence is NADPH-dependent 7-cyano-7-deazaguanine reductase (153 aa).

Cysteine 51 (thioimide intermediate) is an active-site residue. Aspartate 58 serves as the catalytic Proton donor. Substrate contacts are provided by residues 73–75 and 92–93; these read VES and HE.

The protein belongs to the GTP cyclohydrolase I family. QueF type 1 subfamily.

It is found in the cytoplasm. The catalysed reaction is 7-aminomethyl-7-carbaguanine + 2 NADP(+) = 7-cyano-7-deazaguanine + 2 NADPH + 3 H(+). Its pathway is tRNA modification; tRNA-queuosine biosynthesis. In terms of biological role, catalyzes the NADPH-dependent reduction of 7-cyano-7-deazaguanine (preQ0) to 7-aminomethyl-7-deazaguanine (preQ1). The polypeptide is NADPH-dependent 7-cyano-7-deazaguanine reductase (Granulibacter bethesdensis (strain ATCC BAA-1260 / CGDNIH1)).